Here is a 735-residue protein sequence, read N- to C-terminus: Ethylene receptor 1 (735 aa).

The next 3 membrane-spanning stretches (helical) occupy residues 23–43 (ISDF…IYFV), 54–74 (VLVQ…INLW), and 92–112 (VLTA…IPDL). Cu cation-binding residues include Cys-65 and His-69. Residues 158–307 (DRHTILKTTL…VVADQVAVAL (150 aa)) form the GAF domain. The region spanning 350 to 586 (VMNHEMRTPM…IFDVKLAISN (237 aa)) is the Histidine kinase domain. A Phosphohistidine; by autocatalysis modification is found at His-353. The region spanning 609-726 (KVLVMDENGV…NMRNVLSDRL (118 aa)) is the Response regulatory domain. At Asp-657 the chain carries 4-aspartylphosphate. A Glycyl lysine isopeptide (Lys-Gly) (interchain with G-Cter in ubiquitin) cross-link involves residue Lys-711.

It belongs to the ethylene receptor family. Homodimer; disulfide-linked. It depends on Cu cation as a cofactor. Activation probably requires a transfer of a phosphate group between a His in the transmitter domain and an Asp of the receiver domain.

It localises to the endoplasmic reticulum membrane. It catalyses the reaction ATP + protein L-histidine = ADP + protein N-phospho-L-histidine.. Its function is as follows. May act early in the ethylene signal transduction pathway, possibly as an ethylene receptor, or as a regulator of the pathway. This chain is Ethylene receptor 1 (ETR1), found in Brassica oleracea (Wild cabbage).